Reading from the N-terminus, the 91-residue chain is Molybdopterin synthase sulfur carrier subunit (91 aa).

Gly-91 carries the 1-thioglycine; alternate modification. Gly-91 is subject to Glycyl adenylate; alternate.

This sequence belongs to the MoaD family. MOCS2A subfamily. As to quaternary structure, heterotetramer; composed of 2 small (MOCS2A) and 2 large (MOCS2B) subunits. In terms of processing, C-terminal thiocarboxylation occurs in 2 steps, it is first acyl-adenylated (-COAMP) via the hesA/moeB/thiF part of MOCS3, then thiocarboxylated (-COSH) via the rhodanese domain of MOCS3.

The protein resides in the cytoplasm. It participates in cofactor biosynthesis; molybdopterin biosynthesis. Functionally, acts as a sulfur carrier required for molybdopterin biosynthesis. Component of the molybdopterin synthase complex that catalyzes the conversion of precursor Z into molybdopterin by mediating the incorporation of 2 sulfur atoms into precursor Z to generate a dithiolene group. In the complex, serves as sulfur donor by being thiocarboxylated (-COSH) at its C-terminus by MOCS3. After interaction with MOCS2B, the sulfur is then transferred to precursor Z to form molybdopterin. The chain is Molybdopterin synthase sulfur carrier subunit from Anopheles gambiae (African malaria mosquito).